We begin with the raw amino-acid sequence, 129 residues long: Follitropin subunit beta (129 aa).

The signal sequence occupies residues methionine 1–cysteine 18. Disulfide bonds link cysteine 21–cysteine 69, cysteine 35–cysteine 84, cysteine 38–cysteine 122, cysteine 46–cysteine 100, cysteine 50–cysteine 102, and cysteine 105–cysteine 112. N-linked (GlcNAc...) asparagine glycosylation is found at asparagine 25 and asparagine 42.

This sequence belongs to the glycoprotein hormones subunit beta family. In terms of assembly, heterodimer. The active follitropin is a heterodimer composed of an alpha chain/CGA shared with other hormones and a unique beta chain/FSHB shown here.

It localises to the secreted. Functionally, together with the alpha chain CGA constitutes follitropin, the follicle-stimulating hormone, and provides its biological specificity to the hormone heterodimer. Binds FSHR, a G protein-coupled receptor, on target cells to activate downstream signaling pathways. Follitropin is involved in follicle development and spermatogenesis in reproductive organs. This chain is Follitropin subunit beta (FSHB), found in Macaca fascicularis (Crab-eating macaque).